A 533-amino-acid chain; its full sequence is Probable protein kinase UbiB (533 aa).

The helical transmembrane segment at Leu-24–Trp-44 threads the bilayer. The 369-residue stretch at Arg-126–Gly-494 folds into the Protein kinase domain. ATP-binding positions include Leu-132–Val-140 and Lys-154. The active-site Proton acceptor is the Asp-289. A helical membrane pass occupies residues Leu-510–Ile-530.

Belongs to the ABC1 family. UbiB subfamily.

The protein resides in the cell inner membrane. The protein operates within cofactor biosynthesis; ubiquinone biosynthesis [regulation]. In terms of biological role, is probably a protein kinase regulator of UbiI activity which is involved in aerobic coenzyme Q (ubiquinone) biosynthesis. This Pseudomonas aeruginosa (strain ATCC 15692 / DSM 22644 / CIP 104116 / JCM 14847 / LMG 12228 / 1C / PRS 101 / PAO1) protein is Probable protein kinase UbiB.